The chain runs to 202 residues: uncharacterized protein (202 aa).

An N-terminal signal peptide occupies residues 1–19; that stretch reads MRRKNGFSVASVFILCSIA. A helical membrane pass occupies residues 177-199; that stretch reads FLASSSSSFSSFLPSIAIILFFV.

The protein resides in the membrane. This is an uncharacterized protein from Caenorhabditis elegans.